The primary structure comprises 347 residues: Tyrosine recombinase XerC 2 (347 aa).

The Core-binding (CB) domain maps to 17-108 (LVLTRYMEAH…PLKTWFKWLA (92 aa)). The Tyr recombinase domain occupies 125-313 (KLPKHLPRAI…SIEHLRAIHD (189 aa)). Residues arginine 170, lysine 195, histidine 265, arginine 268, and histidine 291 contribute to the active site. Residue tyrosine 300 is the O-(3'-phospho-DNA)-tyrosine intermediate of the active site.

It belongs to the 'phage' integrase family.

It localises to the cytoplasm. Functionally, site-specific tyrosine recombinase, which acts by catalyzing the cutting and rejoining of the recombining DNA molecules. The sequence is that of Tyrosine recombinase XerC 2 from Ralstonia nicotianae (strain ATCC BAA-1114 / GMI1000) (Ralstonia solanacearum).